The primary structure comprises 429 residues: SH2 domain-containing protein 5 (429 aa).

Residues 302-398 form the SH2 domain; it reads WAFAGLSRSC…LSMGRLNPTY (97 aa).

In terms of assembly, interacts with BCR. In terms of tissue distribution, highly expressed in brain, particularly in Purkinjie cells in the cerebellum and the cornu ammonis of the hippocampus.

The protein resides in the postsynaptic density. Its function is as follows. May be involved in synaptic plasticity regulation through the control of Rac-GTP levels. This is SH2 domain-containing protein 5 from Mus musculus (Mouse).